The chain runs to 368 residues: 3-isopropylmalate dehydrogenase (368 aa).

Position 77–88 (77–88) interacts with NAD(+); it reads GPKWGTGAVRPE. 4 residues coordinate substrate: Arg95, Arg105, Arg134, and Asp226. 3 residues coordinate Mg(2+): Asp226, Asp251, and Asp255. An NAD(+)-binding site is contributed by 290 to 301; it reads GSAPDLPANKVN.

The protein belongs to the isocitrate and isopropylmalate dehydrogenases family. In terms of assembly, homodimer. Requires Mg(2+) as cofactor. Mn(2+) is required as a cofactor.

The protein localises to the cytoplasm. It carries out the reaction (2R,3S)-3-isopropylmalate + NAD(+) = 4-methyl-2-oxopentanoate + CO2 + NADH. It functions in the pathway amino-acid biosynthesis; L-leucine biosynthesis; L-leucine from 3-methyl-2-oxobutanoate: step 3/4. Catalyzes the oxidation of 3-carboxy-2-hydroxy-4-methylpentanoate (3-isopropylmalate) to 3-carboxy-4-methyl-2-oxopentanoate. The product decarboxylates to 4-methyl-2 oxopentanoate. In Kodamaea ohmeri (Yeast), this protein is 3-isopropylmalate dehydrogenase (LEU2).